Here is a 156-residue protein sequence, read N- to C-terminus: UPF0251 protein Sfum_2819 (156 aa).

Belongs to the UPF0251 family.

This Syntrophobacter fumaroxidans (strain DSM 10017 / MPOB) protein is UPF0251 protein Sfum_2819.